Consider the following 456-residue polypeptide: MPYIPHTPNDTKEMLAAIGAQDIQDLFDEIPASLQYAGFQNIPAGINEMEMLKEAQNQAQKNRNGICFIGAGCYEHHIPAAVWDIASRGEFLTAYTPYQAEASQGTLQLLYEYQTMICELTGMEVSNASMYDGATALAEAVLMAVRLNKHSKTNRVLIAGTVHPFYRETIETIVRNQHIEVITLPFDEQQGITDLGSLNQYTGEDITALVIAQPNFFGCLEQVDKMTSWAHHNKTISVACINPTSLALLKPPGSWGEHGVDIVCGEGQPLGSPMASGGPYFGFLSTRMAHVRQMPGRIIGRTVDKDGKTGFSLTLQAREQHIRRAKATSNICTNQGLLVTAATIYMSLLGPEGLSQVATQCHQNTHELITALTQIEGVEQAFKASFFHEALIKLNQPVQSVLQQLADAGIAGGYAPEQHYPQLANTLLVCATEVRTAEDIAKYAKTLKAIMSKRGA.

Belongs to the GcvP family. N-terminal subunit subfamily. In terms of assembly, the glycine cleavage system is composed of four proteins: P, T, L and H. In this organism, the P 'protein' is a heterodimer of two subunits.

The catalysed reaction is N(6)-[(R)-lipoyl]-L-lysyl-[glycine-cleavage complex H protein] + glycine + H(+) = N(6)-[(R)-S(8)-aminomethyldihydrolipoyl]-L-lysyl-[glycine-cleavage complex H protein] + CO2. The glycine cleavage system catalyzes the degradation of glycine. The P protein binds the alpha-amino group of glycine through its pyridoxal phosphate cofactor; CO(2) is released and the remaining methylamine moiety is then transferred to the lipoamide cofactor of the H protein. The protein is Probable glycine dehydrogenase (decarboxylating) subunit 1 of Legionella pneumophila (strain Lens).